The primary structure comprises 232 residues: Histone H1B (232 aa).

A compositionally biased stretch (low complexity) spans 1-18 (MSDPAVEVTPAVPVASPA). 2 disordered regions span residues 1-44 (MSDP…PPVS) and 99-232 (QTKG…AKKA). The H15 domain occupies 39–113 (THPPVSEMVV…GASGSFKLPA (75 aa)). Basic residues-rich tracts occupy residues 132 to 141 (KPKKAAAKPK), 147 to 173 (KVKK…KTTK), 181 to 197 (AAKK…KPKA), 205 to 214 (KRAAAPKAKK), and 222 to 232 (KAAKKPAAKKA).

Belongs to the histone H1/H5 family.

The protein resides in the nucleus. It localises to the chromosome. Functionally, histones H1 are necessary for the condensation of nucleosome chains into higher-order structures. This Chironomus tentans (Midge) protein is Histone H1B.